The chain runs to 360 residues: Phospho-N-acetylmuramoyl-pentapeptide-transferase (360 aa).

Transmembrane regions (helical) follow at residues 27–47, 71–91, 93–113, 128–148, 168–188, 199–219, 239–259, 262–282, 288–308, and 337–357; these read GAMI…INSL, TPTM…LLWA, LASV…AIGF, FSGK…AFTI, LVIN…VGAG, GLAI…AYLS, LAVV…FNAP, AIFM…TVAV, IVLA…IIQV, and QVVI…LSTL.

The protein belongs to the glycosyltransferase 4 family. MraY subfamily. Mg(2+) is required as a cofactor.

Its subcellular location is the cell inner membrane. It catalyses the reaction UDP-N-acetyl-alpha-D-muramoyl-L-alanyl-gamma-D-glutamyl-meso-2,6-diaminopimeloyl-D-alanyl-D-alanine + di-trans,octa-cis-undecaprenyl phosphate = di-trans,octa-cis-undecaprenyl diphospho-N-acetyl-alpha-D-muramoyl-L-alanyl-D-glutamyl-meso-2,6-diaminopimeloyl-D-alanyl-D-alanine + UMP. It participates in cell wall biogenesis; peptidoglycan biosynthesis. Its function is as follows. Catalyzes the initial step of the lipid cycle reactions in the biosynthesis of the cell wall peptidoglycan: transfers peptidoglycan precursor phospho-MurNAc-pentapeptide from UDP-MurNAc-pentapeptide onto the lipid carrier undecaprenyl phosphate, yielding undecaprenyl-pyrophosphoryl-MurNAc-pentapeptide, known as lipid I. The chain is Phospho-N-acetylmuramoyl-pentapeptide-transferase from Brucella abortus (strain S19).